The primary structure comprises 159 residues: 17 kDa surface antigen (159 aa).

Positions 1–19 are cleaved as a signal peptide; the sequence is MKLLSKIMIIALATSMLQA. A lipid anchor (N-palmitoyl cysteine) is attached at Cys20. Cys20 is lipidated: S-diacylglycerol cysteine.

It belongs to the rickettsiale 17 kDa surface antigen family.

Its subcellular location is the cell outer membrane. This is 17 kDa surface antigen (omp) from Rickettsia conorii (strain ATCC VR-613 / Malish 7).